We begin with the raw amino-acid sequence, 103 residues long: Large ribosomal subunit protein bL21 (103 aa).

The protein belongs to the bacterial ribosomal protein bL21 family. As to quaternary structure, part of the 50S ribosomal subunit. Contacts protein L20.

Functionally, this protein binds to 23S rRNA in the presence of protein L20. The chain is Large ribosomal subunit protein bL21 from Parvibaculum lavamentivorans (strain DS-1 / DSM 13023 / NCIMB 13966).